We begin with the raw amino-acid sequence, 404 residues long: Cysteine desulfurase IscS (404 aa).

Residues 75 to 76, Asn-155, Gln-183, and 203 to 205 contribute to the pyridoxal 5'-phosphate site; these read AT and SAH. Lys-206 carries the N6-(pyridoxal phosphate)lysine modification. Thr-243 contributes to the pyridoxal 5'-phosphate binding site. Cys-328 serves as the catalytic Cysteine persulfide intermediate. A [2Fe-2S] cluster-binding site is contributed by Cys-328.

It belongs to the class-V pyridoxal-phosphate-dependent aminotransferase family. NifS/IscS subfamily. Homodimer. Forms a heterotetramer with IscU, interacts with other sulfur acceptors. Pyridoxal 5'-phosphate is required as a cofactor.

Its subcellular location is the cytoplasm. The enzyme catalyses (sulfur carrier)-H + L-cysteine = (sulfur carrier)-SH + L-alanine. It functions in the pathway cofactor biosynthesis; iron-sulfur cluster biosynthesis. Master enzyme that delivers sulfur to a number of partners involved in Fe-S cluster assembly, tRNA modification or cofactor biosynthesis. Catalyzes the removal of elemental sulfur atoms from cysteine to produce alanine. Functions as a sulfur delivery protein for Fe-S cluster synthesis onto IscU, an Fe-S scaffold assembly protein, as well as other S acceptor proteins. In Shewanella piezotolerans (strain WP3 / JCM 13877), this protein is Cysteine desulfurase IscS.